A 102-amino-acid chain; its full sequence is Large ribosomal subunit protein bL21 (102 aa).

It belongs to the bacterial ribosomal protein bL21 family. Part of the 50S ribosomal subunit. Contacts protein L20.

This protein binds to 23S rRNA in the presence of protein L20. This Bacillus pumilus (strain SAFR-032) protein is Large ribosomal subunit protein bL21.